We begin with the raw amino-acid sequence, 296 residues long: Lipoyl synthase (296 aa).

7 residues coordinate [4Fe-4S] cluster: Cys-34, Cys-39, Cys-45, Cys-60, Cys-64, Cys-67, and Ser-276. Positions 46–265 (WGEGTATFMI…GEVALSMGFK (220 aa)) constitute a Radical SAM core domain.

It belongs to the radical SAM superfamily. Lipoyl synthase family. Requires [4Fe-4S] cluster as cofactor.

It localises to the cytoplasm. The enzyme catalyses [[Fe-S] cluster scaffold protein carrying a second [4Fe-4S](2+) cluster] + N(6)-octanoyl-L-lysyl-[protein] + 2 oxidized [2Fe-2S]-[ferredoxin] + 2 S-adenosyl-L-methionine + 4 H(+) = [[Fe-S] cluster scaffold protein] + N(6)-[(R)-dihydrolipoyl]-L-lysyl-[protein] + 4 Fe(3+) + 2 hydrogen sulfide + 2 5'-deoxyadenosine + 2 L-methionine + 2 reduced [2Fe-2S]-[ferredoxin]. The protein operates within protein modification; protein lipoylation via endogenous pathway; protein N(6)-(lipoyl)lysine from octanoyl-[acyl-carrier-protein]: step 2/2. Its function is as follows. Catalyzes the radical-mediated insertion of two sulfur atoms into the C-6 and C-8 positions of the octanoyl moiety bound to the lipoyl domains of lipoate-dependent enzymes, thereby converting the octanoylated domains into lipoylated derivatives. In Pyrobaculum arsenaticum (strain DSM 13514 / JCM 11321 / PZ6), this protein is Lipoyl synthase.